Here is a 301-residue protein sequence, read N- to C-terminus: Protease HtpX (301 aa).

The next 2 helical transmembrane spans lie at 4 to 24 (IGLFLLTNLAVLVVAGIILSL) and 38 to 58 (LGNLLVICFVFGMVGSLVSLF). Position 147 (H147) interacts with Zn(2+). E148 is an active-site residue. H151 is a binding site for Zn(2+). 2 helical membrane passes run 155-175 (GDMVTLALIQGVVNAFVMFFA) and 200-220 (FIITMVLDIVFGILASAIVMW). A Zn(2+)-binding site is contributed by E226.

Belongs to the peptidase M48B family. Zn(2+) serves as cofactor.

It is found in the cell inner membrane. This chain is Protease HtpX, found in Acinetobacter baumannii (strain AB307-0294).